Consider the following 237-residue polypeptide: 2,3-bisphosphoglycerate-dependent phosphoglycerate mutase (237 aa).

Substrate is bound by residues 8-15, 21-22, Arg-60, 87-90, Lys-98, 114-115, and 180-181; these read RHGQSQWN, TG, ERHY, RR, and GN. His-9 serves as the catalytic Tele-phosphohistidine intermediate. The Proton donor/acceptor role is filled by Glu-87.

This sequence belongs to the phosphoglycerate mutase family. BPG-dependent PGAM subfamily. In terms of assembly, homodimer.

The catalysed reaction is (2R)-2-phosphoglycerate = (2R)-3-phosphoglycerate. Its pathway is carbohydrate degradation; glycolysis; pyruvate from D-glyceraldehyde 3-phosphate: step 3/5. Catalyzes the interconversion of 2-phosphoglycerate and 3-phosphoglycerate. The sequence is that of 2,3-bisphosphoglycerate-dependent phosphoglycerate mutase from Caulobacter sp. (strain K31).